Reading from the N-terminus, the 221-residue chain is U1 small nuclear ribonucleoprotein C (221 aa).

The Matrin-type zinc-finger motif lies at 4-36 (YFCDYCDTYLTHDSPSVRKTHCNGRKHKENVRV). Positions 100 to 168 (SNPFPTSQAG…PPGAPTLPQP (69 aa)) are disordered. Pro residues predominate over residues 134–166 (APAPPRMPGPLLMTPPPGAAAPGMAPPGAPTLP).

The protein belongs to the U1 small nuclear ribonucleoprotein C family. In terms of assembly, U1 snRNP is composed of the 7 core Sm proteins B/B', D1, D2, D3, E, F and G that assemble in a heptameric protein ring on the Sm site of the small nuclear RNA to form the core snRNP, and at least 3 U1 snRNP-specific proteins U1-70K, U1-A and U1-C. U1-C interacts with U1 snRNA and the 5' splice-site region of the pre-mRNA.

The protein localises to the nucleus. Functionally, component of the spliceosomal U1 snRNP, which is essential for recognition of the pre-mRNA 5' splice-site and the subsequent assembly of the spliceosome. U1-C is directly involved in initial 5' splice-site recognition for both constitutive and regulated alternative splicing. The interaction with the 5' splice-site seems to precede base-pairing between the pre-mRNA and the U1 snRNA. Stimulates commitment or early (E) complex formation by stabilizing the base pairing of the 5' end of the U1 snRNA and the 5' splice-site region. The chain is U1 small nuclear ribonucleoprotein C from Branchiostoma floridae (Florida lancelet).